The following is a 482-amino-acid chain: Malvidin galactosylase UGT88C3 (482 aa).

The active-site Proton acceptor is His-16. Asp-117 acts as the Charge relay in catalysis. Residues Ser-279, Trp-345, Ala-349, His-366, Asn-370, Ser-371, and Glu-374 each coordinate UDP.

Belongs to the UDP-glycosyltransferase family.

The protein resides in the endoplasmic reticulum. It localises to the nucleus. It carries out the reaction malvidin + UDP-alpha-D-galactose = malvidin 3-O-beta-D-galactoside + UDP + H(+). The protein operates within pigment biosynthesis; anthocyanin biosynthesis. Its function is as follows. UDP-glycosyltransferase which uses UDP-galactose and malvidin as substrates to catalyze the biosynthesis of malvidin 3-O-galactoside, an anthocyanin conferring purple pigmentation. In Oryza sativa subsp. indica (Rice), this protein is Malvidin galactosylase UGT88C3.